The following is a 362-amino-acid chain: Molybdenum import ATP-binding protein ModC (362 aa).

The ABC transporter domain occupies 2–236 (ASPIEVRLHM…LDLPLAMGGD (235 aa)). 34-41 (GPSGSGKT) contacts ATP. In terms of domain architecture, Mop spans 297 to 362 (QSSILNRLPV…AQIKAVAVLA (66 aa)).

It belongs to the ABC transporter superfamily. Molybdate importer (TC 3.A.1.8) family. As to quaternary structure, the complex is composed of two ATP-binding proteins (ModC), two transmembrane proteins (ModB) and a solute-binding protein (ModA).

The protein localises to the cell inner membrane. It carries out the reaction molybdate(out) + ATP + H2O = molybdate(in) + ADP + phosphate + H(+). Its function is as follows. Part of the ABC transporter complex ModABC involved in molybdenum import. Responsible for energy coupling to the transport system. The sequence is that of Molybdenum import ATP-binding protein ModC from Pseudomonas savastanoi pv. phaseolicola (strain 1448A / Race 6) (Pseudomonas syringae pv. phaseolicola (strain 1448A / Race 6)).